The following is a 1365-amino-acid chain: Serine/threonine-protein kinase LMTK1 (1365 aa).

A helical membrane pass occupies residues 32-52 (LAVVAVSFSGIFTVVILMLAC). Residues 126–396 (LLYLKEIGHG…PTAEEVHLLL (271 aa)) enclose the Protein kinase domain. Residues 132–140 (IGHGWFGKV) and Lys-157 each bind ATP. The Proton acceptor role is filled by Asp-254. Position 500 is a phosphoserine (Ser-500). Disordered regions lie at residues 550-623 (PDCA…LPAE), 638-698 (DDPL…GYVS), 791-1186 (QEAE…PAVP), 1237-1293 (ESPT…EWDG), and 1343-1365 (ISDSDAQSVGGPAAGAGGRYTEA). A compositionally biased stretch (polar residues) spans 560-575 (QAVTDQDNNSEESTVA). 2 stretches are compositionally biased toward low complexity: residues 638–655 (DDPLGASPSGSPGAQPSP) and 675–686 (SSNMSANNNSAS). Composition is skewed to polar residues over residues 848–860 (LESSGSSLGQEAP) and 869–879 (EATSGVFTDLS). 2 stretches are compositionally biased toward low complexity: residues 904 to 918 (PDSLDSLDIPSSASD) and 981 to 993 (PLLSVSLGGLSKK). Basic and acidic residues predominate over residues 1015–1030 (PEKHSGIQDSQKEQDL). At Ser-1035 the chain carries Phosphoserine. The segment covering 1037–1053 (GHQSVQAFPRSAVSSEV) has biased composition (polar residues). Residues 1072-1083 (PLGAQGPVGVQP) are compositionally biased toward low complexity. Residues 1104 to 1132 (GSGTEPQGPSGQLSGRAQQGQMGNPSTPR) are compositionally biased toward polar residues. The span at 1150 to 1164 (PEEDEDTEDSEESDE) shows a compositional bias: acidic residues. At Thr-1156 the chain carries Phosphothreonine. Phosphoserine occurs at positions 1159, 1162, 1175, 1178, and 1253. The segment covering 1354-1365 (PAAGAGGRYTEA) has biased composition (gly residues).

It belongs to the protein kinase superfamily. Tyr protein kinase family. As to quaternary structure, interacts with CDK5. Autophosphorylated. Phosphorylated by CDK5. Expressed in brain, and, to a lower extent, in kidney, heart, lung and skeletal muscle. In the brain, expressed in the olfactory bulb, cerebellum, striatum, hippocampal formation, thalamus, hypothalamus, and pontine nuclei (at protein level).

Its subcellular location is the membrane. The protein localises to the cytoplasm. It localises to the perinuclear region. The protein resides in the cell projection. It is found in the dendrite. Its subcellular location is the axon. The protein localises to the growth cone. The enzyme catalyses L-seryl-[protein] + ATP = O-phospho-L-seryl-[protein] + ADP + H(+). It catalyses the reaction L-threonyl-[protein] + ATP = O-phospho-L-threonyl-[protein] + ADP + H(+). Functionally, may be involved in neuronal differentiation. This chain is Serine/threonine-protein kinase LMTK1 (Aatk), found in Mus musculus (Mouse).